The sequence spans 295 residues: Pyridoxal 5'-phosphate synthase subunit PdxS (295 aa).

Asp25 provides a ligand contact to D-ribose 5-phosphate. Residue Lys82 is the Schiff-base intermediate with D-ribose 5-phosphate of the active site. Position 154 (Gly154) interacts with D-ribose 5-phosphate. Residue Arg166 participates in D-glyceraldehyde 3-phosphate binding. D-ribose 5-phosphate contacts are provided by residues Gly215 and 236–237 (GS).

The protein belongs to the PdxS/SNZ family. In the presence of PdxT, forms a dodecamer of heterodimers.

The enzyme catalyses aldehydo-D-ribose 5-phosphate + D-glyceraldehyde 3-phosphate + L-glutamine = pyridoxal 5'-phosphate + L-glutamate + phosphate + 3 H2O + H(+). It participates in cofactor biosynthesis; pyridoxal 5'-phosphate biosynthesis. Its function is as follows. Catalyzes the formation of pyridoxal 5'-phosphate from ribose 5-phosphate (RBP), glyceraldehyde 3-phosphate (G3P) and ammonia. The ammonia is provided by the PdxT subunit. Can also use ribulose 5-phosphate and dihydroxyacetone phosphate as substrates, resulting from enzyme-catalyzed isomerization of RBP and G3P, respectively. This Oceanobacillus iheyensis (strain DSM 14371 / CIP 107618 / JCM 11309 / KCTC 3954 / HTE831) protein is Pyridoxal 5'-phosphate synthase subunit PdxS.